The primary structure comprises 193 residues: Ion-translocating oxidoreductase complex subunit A (193 aa).

A run of 6 helical transmembrane segments spans residues Leu5–Leu25, Ile39–Met59, Phe62–Ala82, Leu102–Leu122, Ala134–Ile154, and Ser171–Val191.

Belongs to the NqrDE/RnfAE family. In terms of assembly, the complex is composed of six subunits: RnfA, RnfB, RnfC, RnfD, RnfE and RnfG.

It is found in the cell inner membrane. Functionally, part of a membrane-bound complex that couples electron transfer with translocation of ions across the membrane. This Proteus mirabilis (strain HI4320) protein is Ion-translocating oxidoreductase complex subunit A.